Here is a 417-residue protein sequence, read N- to C-terminus: RH-like protein IC (417 aa).

Transmembrane regions (helical) follow at residues cysteine 12 to threonine 32, leucine 44 to phenylalanine 64, valine 77 to phenylalanine 97, isoleucine 125 to valine 145, phenylalanine 172 to proline 192, threonine 203 to phenylalanine 223, valine 238 to leucine 258, isoleucine 265 to cysteine 285, leucine 287 to glycine 307, asparagine 331 to threonine 351, and methionine 358 to valine 378.

It belongs to the ammonium transporter (TC 2.A.49) family. Rh subfamily.

The protein resides in the membrane. In terms of biological role, may be part of an oligomeric complex which is likely to have a transport or channel function in the erythrocyte membrane. This is RH-like protein IC from Gorilla gorilla gorilla (Western lowland gorilla).